The chain runs to 438 residues: Enolase (438 aa).

(2R)-2-phosphoglycerate is bound at residue Q174. E216 acts as the Proton donor in catalysis. The Mg(2+) site is built by D253, E297, and D324. (2R)-2-phosphoglycerate contacts are provided by K349, R378, S379, and K400. K349 acts as the Proton acceptor in catalysis.

This sequence belongs to the enolase family. As to quaternary structure, component of the RNA degradosome, a multiprotein complex involved in RNA processing and mRNA degradation. It depends on Mg(2+) as a cofactor.

It localises to the cytoplasm. Its subcellular location is the secreted. It is found in the cell surface. It catalyses the reaction (2R)-2-phosphoglycerate = phosphoenolpyruvate + H2O. Its pathway is carbohydrate degradation; glycolysis; pyruvate from D-glyceraldehyde 3-phosphate: step 4/5. Its function is as follows. Catalyzes the reversible conversion of 2-phosphoglycerate (2-PG) into phosphoenolpyruvate (PEP). It is essential for the degradation of carbohydrates via glycolysis. The chain is Enolase from Psychrobacter arcticus (strain DSM 17307 / VKM B-2377 / 273-4).